Here is a 550-residue protein sequence, read N- to C-terminus: Zinc finger protein 426 (550 aa).

A KRAB domain is found at 39-110 (VSFEDVIVDF…KIVFPEWKLQ (72 aa)). 11 C2H2-type zinc fingers span residues 219 to 241 (FECSDCGKSFMSQSHLQTHQRTH), 274 to 296 (HRCKECGKGYRYPAYLNIHMRTH), 302 to 324 (YECKECGKAFNYSNSFQIHGRTH), 330 to 352 (YVCSQCGKAFTQHSGLSIHVRSH), 358 to 380 (YGCKECGKAFLTSSRLIQHIRTH), 386 to 408 (FVCVKCGKAFAISSNLNGHLKLH), 414 to 436 (CECKICGKAFGYLSCLNNHMRTH), 442 to 464 (YTCKECGKAFNYSTHLKIHMRIH), 470 to 492 (YECKQCGKAFSHSTSFQIHERTH), 498 to 522 (YECKECGKAFICPSSFRIHEISHTH), and 528 to 550 (YKCQQCGKAYSHPRSLRRHERIH).

It localises to the nucleus. Its function is as follows. May be involved in transcriptional regulation. The sequence is that of Zinc finger protein 426 (Znf426) from Mus musculus (Mouse).